Consider the following 363-residue polypeptide: UDP-3-O-acylglucosamine N-acyltransferase (363 aa).

Catalysis depends on His252, which acts as the Proton acceptor.

It belongs to the transferase hexapeptide repeat family. LpxD subfamily. Homotrimer.

The catalysed reaction is a UDP-3-O-[(3R)-3-hydroxyacyl]-alpha-D-glucosamine + a (3R)-hydroxyacyl-[ACP] = a UDP-2-N,3-O-bis[(3R)-3-hydroxyacyl]-alpha-D-glucosamine + holo-[ACP] + H(+). Its pathway is bacterial outer membrane biogenesis; LPS lipid A biosynthesis. Functionally, catalyzes the N-acylation of UDP-3-O-acylglucosamine using 3-hydroxyacyl-ACP as the acyl donor. Is involved in the biosynthesis of lipid A, a phosphorylated glycolipid that anchors the lipopolysaccharide to the outer membrane of the cell. This is UDP-3-O-acylglucosamine N-acyltransferase from Cupriavidus taiwanensis (strain DSM 17343 / BCRC 17206 / CCUG 44338 / CIP 107171 / LMG 19424 / R1) (Ralstonia taiwanensis (strain LMG 19424)).